The sequence spans 258 residues: Deoxyribose-phosphate aldolase (258 aa).

Asp-102 functions as the Proton donor/acceptor in the catalytic mechanism. Lys-165 (schiff-base intermediate with acetaldehyde) is an active-site residue. Lys-199 serves as the catalytic Proton donor/acceptor.

The protein belongs to the DeoC/FbaB aldolase family. DeoC type 2 subfamily.

Its subcellular location is the cytoplasm. The enzyme catalyses 2-deoxy-D-ribose 5-phosphate = D-glyceraldehyde 3-phosphate + acetaldehyde. The protein operates within carbohydrate degradation; 2-deoxy-D-ribose 1-phosphate degradation; D-glyceraldehyde 3-phosphate and acetaldehyde from 2-deoxy-alpha-D-ribose 1-phosphate: step 2/2. Catalyzes a reversible aldol reaction between acetaldehyde and D-glyceraldehyde 3-phosphate to generate 2-deoxy-D-ribose 5-phosphate. This chain is Deoxyribose-phosphate aldolase, found in Vibrio parahaemolyticus serotype O3:K6 (strain RIMD 2210633).